Reading from the N-terminus, the 256-residue chain is Triosephosphate isomerase (256 aa).

12 to 14 (NWK) contributes to the substrate binding site. Residue histidine 99 is the Electrophile of the active site. Glutamate 171 acts as the Proton acceptor in catalysis. Substrate-binding positions include glycine 177, serine 217, and 238–239 (GG).

It belongs to the triosephosphate isomerase family. As to quaternary structure, homodimer.

It is found in the cytoplasm. It carries out the reaction D-glyceraldehyde 3-phosphate = dihydroxyacetone phosphate. It functions in the pathway carbohydrate biosynthesis; gluconeogenesis. It participates in carbohydrate degradation; glycolysis; D-glyceraldehyde 3-phosphate from glycerone phosphate: step 1/1. Functionally, involved in the gluconeogenesis. Catalyzes stereospecifically the conversion of dihydroxyacetone phosphate (DHAP) to D-glyceraldehyde-3-phosphate (G3P). The polypeptide is Triosephosphate isomerase (Rubrobacter xylanophilus (strain DSM 9941 / JCM 11954 / NBRC 16129 / PRD-1)).